The primary structure comprises 445 residues: Tryptophan 5-hydroxylase 1 (445 aa).

One can recognise an ACT domain in the interval 19-94; it reads AIIFSLKNEV…SIVSMNPTEH (76 aa). Position 58 is a phosphoserine; by PKA (S58). L-tryptophan-binding residues include Y236, R258, and T266. Fe cation-binding residues include H273, H278, and E318. Residues S337 and I367 each coordinate L-tryptophan.

This sequence belongs to the biopterin-dependent aromatic amino acid hydroxylase family. In terms of assembly, homotetramer. Requires Fe(2+) as cofactor.

It catalyses the reaction (6R)-L-erythro-5,6,7,8-tetrahydrobiopterin + L-tryptophan + O2 = 5-hydroxy-L-tryptophan + (4aS,6R)-4a-hydroxy-L-erythro-5,6,7,8-tetrahydrobiopterin. The protein operates within aromatic compound metabolism; serotonin biosynthesis; serotonin from L-tryptophan: step 1/2. Its function is as follows. Oxidizes L-tryptophan to 5-hydroxy-l-tryptophan in the rate-determining step of serotonin biosynthesis. The sequence is that of Tryptophan 5-hydroxylase 1 (TPH1) from Gallus gallus (Chicken).